The chain runs to 219 residues: Small ribosomal subunit protein uS3c (219 aa).

One can recognise a KH type-2 domain in the interval 39-109; it reads IRQYIEKNLS…QIRINVIEVK (71 aa).

It belongs to the universal ribosomal protein uS3 family. In terms of assembly, part of the 30S ribosomal subunit.

It is found in the plastid. It localises to the cyanelle. The sequence is that of Small ribosomal subunit protein uS3c (rps3) from Cyanophora paradoxa.